An 85-amino-acid chain; its full sequence is ATP synthase subunit c (85 aa).

A run of 2 helical transmembrane segments spans residues 22 to 39 (AIGA…IGKI) and 65 to 85 (AALI…VFFL).

The protein belongs to the ATPase C chain family. As to quaternary structure, F-type ATPases have 2 components, F(1) - the catalytic core - and F(0) - the membrane proton channel. F(1) has five subunits: alpha(3), beta(3), gamma(1), delta(1), epsilon(1). F(0) has three main subunits: a(1), b(2) and c(10-14). The alpha and beta chains form an alternating ring which encloses part of the gamma chain. F(1) is attached to F(0) by a central stalk formed by the gamma and epsilon chains, while a peripheral stalk is formed by the delta and b chains.

Its subcellular location is the cell inner membrane. In terms of biological role, f(1)F(0) ATP synthase produces ATP from ADP in the presence of a proton or sodium gradient. F-type ATPases consist of two structural domains, F(1) containing the extramembraneous catalytic core and F(0) containing the membrane proton channel, linked together by a central stalk and a peripheral stalk. During catalysis, ATP synthesis in the catalytic domain of F(1) is coupled via a rotary mechanism of the central stalk subunits to proton translocation. Functionally, key component of the F(0) channel; it plays a direct role in translocation across the membrane. A homomeric c-ring of between 10-14 subunits forms the central stalk rotor element with the F(1) delta and epsilon subunits. This Bacteroides thetaiotaomicron (strain ATCC 29148 / DSM 2079 / JCM 5827 / CCUG 10774 / NCTC 10582 / VPI-5482 / E50) protein is ATP synthase subunit c.